A 407-amino-acid polypeptide reads, in one-letter code: Argininosuccinate synthase (407 aa).

Residues 13–21 and alanine 40 contribute to the ATP site; that span reads AYSGGLDTS. Tyrosine 91 and serine 96 together coordinate L-citrulline. Position 121 (glycine 121) interacts with ATP. L-aspartate is bound by residues threonine 123, asparagine 127, and aspartate 128. Asparagine 127 provides a ligand contact to L-citrulline. Arginine 131, serine 182, serine 191, glutamate 267, and tyrosine 279 together coordinate L-citrulline.

The protein belongs to the argininosuccinate synthase family. Type 1 subfamily. As to quaternary structure, homotetramer.

The protein localises to the cytoplasm. It carries out the reaction L-citrulline + L-aspartate + ATP = 2-(N(omega)-L-arginino)succinate + AMP + diphosphate + H(+). Its pathway is amino-acid biosynthesis; L-arginine biosynthesis; L-arginine from L-ornithine and carbamoyl phosphate: step 2/3. The protein is Argininosuccinate synthase of Bartonella bacilliformis (strain ATCC 35685 / KC583 / Herrer 020/F12,63).